Here is a 512-residue protein sequence, read N- to C-terminus: NAD(P)H-quinone oxidoreductase subunit 2 B, chloroplastic (512 aa).

Helical transmembrane passes span 31-51 (FIFPECILIFGLILLLMIDLT), 57-77 (IPWLYFISSTSFVMSITALLF), 99-119 (IFQFLILLCSTLCIPLSVEYI), 124-144 (MAITEFLLFILTATLGGMFLC), 149-169 (LITIFVALECFSLCSYLLSGY), 183-203 (YLLMGGASSSILVYGFSWLYG), 229-249 (ISIALIFITVGIGFKLSLAPF), 261-281 (PTPVVAFLSVTSKVAALALAT), 295-315 (WHLLLEILAILSMIFGNLIAI), 323-343 (MLAYSSIGQIGYVIIGIIVGD), 354-374 (YMLFYIAMNLGTFACIILFGL), 395-415 (ALSLALCLLSLGGLPPLAGFF), 418-438 (LYLFWCGWQAGLYFLVSIGLL), and 484-504 (MIVCVIASTILGISMNPIIAI).

It belongs to the complex I subunit 2 family. As to quaternary structure, NDH is composed of at least 16 different subunits, 5 of which are encoded in the nucleus.

The protein resides in the plastid. It is found in the chloroplast thylakoid membrane. It catalyses the reaction a plastoquinone + NADH + (n+1) H(+)(in) = a plastoquinol + NAD(+) + n H(+)(out). The enzyme catalyses a plastoquinone + NADPH + (n+1) H(+)(in) = a plastoquinol + NADP(+) + n H(+)(out). Functionally, NDH shuttles electrons from NAD(P)H:plastoquinone, via FMN and iron-sulfur (Fe-S) centers, to quinones in the photosynthetic chain and possibly in a chloroplast respiratory chain. The immediate electron acceptor for the enzyme in this species is believed to be plastoquinone. Couples the redox reaction to proton translocation, and thus conserves the redox energy in a proton gradient. The sequence is that of NAD(P)H-quinone oxidoreductase subunit 2 B, chloroplastic from Arabidopsis thaliana (Mouse-ear cress).